A 400-amino-acid chain; its full sequence is Argininosuccinate synthase (400 aa).

Residues 9 to 17 (AYSGGVDTS) and Ala-37 each bind ATP. L-citrulline is bound at residue Tyr-88. Gly-118 is a binding site for ATP. Residues Thr-120, Asn-124, and Asp-125 each coordinate L-aspartate. Asn-124 contributes to the L-citrulline binding site. L-citrulline is bound by residues Arg-128, Ser-176, Ser-185, Glu-261, and Tyr-273.

The protein belongs to the argininosuccinate synthase family. Type 1 subfamily. As to quaternary structure, homotetramer.

Its subcellular location is the cytoplasm. It carries out the reaction L-citrulline + L-aspartate + ATP = 2-(N(omega)-L-arginino)succinate + AMP + diphosphate + H(+). It functions in the pathway amino-acid biosynthesis; L-arginine biosynthesis; L-arginine from L-ornithine and carbamoyl phosphate: step 2/3. The sequence is that of Argininosuccinate synthase from Prochlorococcus marinus (strain MIT 9211).